The sequence spans 352 residues: Protein AMBP (352 aa).

The first 19 residues, M1–A19, serve as a signal peptide directing secretion. 3-hydroxy-L-kynurenine is bound by residues C53 and K111. Cysteines 91 and 188 form a disulfide. A glycan (N-linked (GlcNAc...) asparagine) is linked at N115. K137 and K149 together coordinate 3-hydroxy-L-kynurenine. The O-linked (Xyl...) (chondroitin sulfate) serine glycan is linked to S215. N223 and N250 each carry an N-linked (GlcNAc...) asparagine glycan. Disulfide bonds link C231–C281, C240–C264, C256–C277, C287–C337, C296–C320, and C312–C333. BPTI/Kunitz inhibitor domains follow at residues C231–C281 and C287–C337.

It in the N-terminal section; belongs to the calycin superfamily. Lipocalin family. Monomer. Homodimer. In plasma, it occurs as a monomer or dimer and in covalently-linked complexes with immunoglobulin A (IgA), ALB/albumin and F2/prothrombin. Chromophore-bound alpha-1-microglobulin interacts with the constant region of immunoglobulin A. Chromophore-bound alpha-1-microglobulin interacts with ALB with molar ratio 2:1 and 1:1; this interaction does not prevent fatty acid binding to ALB. Interacts with F2/prothrombin (via N-terminus) with molar ratio 2:1 and 1:1; this interaction does not prevent the activation of prothrombin to thrombin. Interacts with NDUFAB1, a subunit of mitochondrial complex I. Interacts with FN1. As to quaternary structure, I-alpha-I plasma protease inhibitors are assembled from one or two heavy chains (HC) and one light chain, bikunin. Inter-alpha-inhibitor (I-alpha-I) is composed of ITIH1/HC1, ITIH2/HC2 and bikunin, and pre-alpha-inhibitor (P-alpha-I) of ITIH3/HC3 and bikunin. Interacts with TNFAIP6 (via Link domain). In terms of assembly, monomer. Also occurs as a complex with tryptase in mast cells. In terms of processing, the precursor is proteolytically processed into separately functioning proteins. 3-hydroxykynurenine, an oxidized tryptophan metabolite that is common in biological fluids, reacts with Cys-53, Lys-111, Lys-137, and Lys-149 to form heterogeneous polycyclic chromophores including hydroxanthommatin. The reaction by alpha-1-microglobulin is autocatalytic; the human protein forms chromophore even when expressed in insect and bacterial cells. The chromophore can react with accessible cysteines forming non-reducible thioether cross-links with other molecules of alpha-1-microglobulin or with other proteins such as Ig alpha-1 chain C region 'Cys-352'. Post-translationally, heavy chains are interlinked with bikunin via a chondroitin 4-sulfate bridge to the C-terminal aspartate. In terms of processing, proteolytically cleaved by PRSS3 at Kunitz domain 2. Expressed by the liver and secreted in plasma.

It is found in the secreted. The protein localises to the endoplasmic reticulum. It localises to the cytoplasm. Its subcellular location is the cytosol. The protein resides in the cell membrane. It is found in the nucleus membrane. The protein localises to the mitochondrion inner membrane. It localises to the extracellular space. Its subcellular location is the extracellular matrix. Antioxidant and tissue repair protein with reductase, heme-binding and radical-scavenging activities. Removes and protects against harmful oxidants and repairs macromolecules in intravascular and extravascular spaces and in intracellular compartments. Intravascularly, plays a regulatory role in red cell homeostasis by preventing heme- and reactive oxygen species-induced cell damage. Binds and degrades free heme to protect fetal and adult red blood cells from hemolysis. Reduces extracellular methemoglobin, a Fe3+ (ferric) form of hemoglobin that cannot bind oxygen, back to the Fe2+ (ferrous) form deoxyhemoglobin, which has oxygen-carrying potential. Upon acute inflammation, inhibits oxidation of low-density lipoprotein particles by MPO and limits vascular damage. Extravascularly, protects from oxidation products formed on extracellular matrix structures and cell membranes. Catalyzes the reduction of carbonyl groups on oxidized collagen fibers and preserves cellular and extracellular matrix ultrastructures. Importantly, counteracts the oxidative damage at blood-placenta interface, preventing leakage of free fetal hemoglobin into the maternal circulation. Intracellularly, has a role in maintaining mitochondrial redox homeostasis. Bound to complex I of the respiratory chain of mitochondria, may scavenge free radicals and preserve mitochondrial ATP synthesis. Protects renal tubule epithelial cells from heme-induced oxidative damage to mitochondria. Reduces cytochrome c from Fe3+ (ferric) to the Fe2+ (ferrous) state through formation of superoxide anion radicals in the presence of ascorbate or NADH/NADPH electron donor cofactors, ascorbate being the preferred cofactor. Has a chaperone role in facilitating the correct folding of bikunin in the endoplasmic reticulum compartment. Functionally, kunitz-type serine protease inhibitor and structural component of extracellular matrix with a role in extracellular space remodeling and cell adhesion. Among others, has antiprotease activity toward kallikrein, a protease involved in airway inflammation; inhibits GZMK/granzyme, a granule-stored serine protease involved in NK and T cell cytotoxic responses; and inhibits PLG/plasmin, a protease required for activation of matrix metalloproteinases. As part of I-alpha-I complex, provides for the heavy chains to be transferred from I-alpha-I complex to hyaluronan in the presence of TNFAIP6, in a dynamic process that releases free bikunin and remodels extracellular matrix proteoglycan structures. Free bikunin, but not its heavy chain-bound form, acts as a potent protease inhibitor in airway secretions. Part of hyaluronan-rich extracellular matrix that surrounds oocyte during cumulus oophorus expansion, an indispensable process for proper ovulation. Also inhibits calcium oxalate crystallization. In terms of biological role, kunitz-type serine protease inhibitor. Has high catalytic efficiency for F10/blood coagulation factor Xa and may act as an anticoagulant by inhibiting prothrombin activation. Inhibits trypsin and mast cell CMA1/chymase and tryptase proteases. The sequence is that of Protein AMBP (AMBP) from Bos taurus (Bovine).